Reading from the N-terminus, the 793-residue chain is Copalyl diphosphate synthase CPS1, chloroplastic (793 aa).

A chloroplast-targeting transit peptide spans 1 to 59 (MASLSSTILSRSPAARRRITPASAKLHRPECFATSAWMGSSSKNLSLSYQLNHKKISVA). Lys-238 is a binding site for substrate. Mg(2+) is bound by residues Asp-370 and Asp-372. Positions 370 to 373 (DIDD) match the DXDD motif motif. A substrate-binding site is contributed by Lys-457.

The protein belongs to the terpene synthase family. Mg(2+) serves as cofactor.

It localises to the plastid. The protein resides in the chloroplast. The enzyme catalyses (2E,6E,10E)-geranylgeranyl diphosphate = (+)-copalyl diphosphate. It functions in the pathway secondary metabolite biosynthesis; terpenoid biosynthesis. Involved in tanshinone biosynthesis in hairy roots. Catalyzes the conversion of geranylgeranyl diphosphate (GGPP) to copalyl diphosphate (CPP). The polypeptide is Copalyl diphosphate synthase CPS1, chloroplastic (Salvia miltiorrhiza (Chinese sage)).